The chain runs to 320 residues: o-succinylbenzoate synthase (320 aa).

K133 acts as the Proton donor in catalysis. The Mg(2+) site is built by D161, E190, and D213. The active-site Proton acceptor is K235.

Belongs to the mandelate racemase/muconate lactonizing enzyme family. MenC type 1 subfamily. The cofactor is a divalent metal cation.

The enzyme catalyses (1R,6R)-6-hydroxy-2-succinyl-cyclohexa-2,4-diene-1-carboxylate = 2-succinylbenzoate + H2O. Its pathway is quinol/quinone metabolism; 1,4-dihydroxy-2-naphthoate biosynthesis; 1,4-dihydroxy-2-naphthoate from chorismate: step 4/7. It participates in quinol/quinone metabolism; menaquinone biosynthesis. Converts 2-succinyl-6-hydroxy-2,4-cyclohexadiene-1-carboxylate (SHCHC) to 2-succinylbenzoate (OSB). This Shigella sonnei (strain Ss046) protein is o-succinylbenzoate synthase.